The primary structure comprises 594 residues: Chitooligosaccharidolytic beta-N-acetylglucosaminidase (594 aa).

The N-terminal stretch at Met1–Ala22 is a signal peptide. 2 disulfide bridges follow: Cys31–Cys59 and Cys36–Cys55. Asn164 is a glycosylation site (N-linked (GlcNAc...) asparagine). Active-site charge relay system residues include Asp249 and His303. 2 cysteine pairs are disulfide-bonded: Cys316-Cys373 and Cys326-Cys331. Glu368 functions as the Charge relay system in the catalytic mechanism. Residue Asn375 is glycosylated (N-linked (GlcNAc...) asparagine). Cystine bridges form between Cys478–Cys491 and Cys585–Cys592.

Belongs to the glycosyl hydrolase 20 family. In terms of assembly, homodimer.

The enzyme catalyses Hydrolysis of terminal non-reducing N-acetyl-D-hexosamine residues in N-acetyl-beta-D-hexosaminides.. With respect to regulation, inhibited by O-(2-acetamido-2-deoxy-D-glucopyransylidene)-amino-N-phenylcarbamate (PUGNAc). Inhibited by thiabendazole (TMG)-chitotriomycin. Inhibited by 6-(dimethylamino)-2-(2-(((5-methyl-1,3,4-thiadiazol-2-yl)methyl)amino)ethyl)- 1H-benzo[de]isoquinoline-1,3(2H)-dione (Q2), a synthesized non-carbohydrate unsymmetrical dyad of naphthalimide and thiadiazole having a dimethylamino group at C4 of the naphthalimide. Inhibited poorly by N-acetyl-glucosamine (NAG)-thiazoline (NGT), but when the thiazoline ring of NGT is replaced by a bulky substituent such as in compound 1,2-dideoxy-2'-methylamino-alpha-D-glucopyranoso-[2,1-d]-Delta2'-thiazoline (NMAGT), the inhibition constant Ki is lowered 600-fold compared to that of NGT. Inhibited by berberine, berberine analogs thalifendine and palmatine, and berberine derivative SYSU-1, but not by berberine analog tetrahydroberberine. Its function is as follows. Hydrolyzes one beta-GlcNAc unit at a time from the non-reducing ends of substrates, with a preference for shorter substrates. The 2-acetamido group and the beta-glycoside bond linkage in the substrate are required for its activity. Active with p-nitrophenyl (pNP)-beta-GlcNAc, pNP-beta-GalNAc and chitooligosaccharides (degree of polymerization from 2 to 6), but not with the complex N-glycan substrate (GlcNAcbeta-1,2Manalpha-1,6)(GlcNAcbeta-1,2Manalpha-1,3)Manbeta-1,4GlcNAcbeta-1,4GlcNAc-PA (GnGn-PA), pNP-alpha-GlcNAc or with the long polymer colloidal chitin. Involved in chitin catabolism. Involved in the degradation of old cuticle during the pupation stage. This Ostrinia furnacalis (Asian corn borer) protein is Chitooligosaccharidolytic beta-N-acetylglucosaminidase.